The chain runs to 511 residues: Putative thymidine phosphorylase 1 (511 aa).

This sequence belongs to the thymidine/pyrimidine-nucleoside phosphorylase family. Type 2 subfamily.

The enzyme catalyses thymidine + phosphate = 2-deoxy-alpha-D-ribose 1-phosphate + thymine. The polypeptide is Putative thymidine phosphorylase 1 (Acidovorax sp. (strain JS42)).